We begin with the raw amino-acid sequence, 168 residues long: Crossover junction endodeoxyribonuclease RuvC (168 aa).

Catalysis depends on residues aspartate 7, glutamate 66, and aspartate 138. Residues aspartate 7, glutamate 66, and aspartate 138 each contribute to the Mg(2+) site.

It belongs to the RuvC family. Homodimer which binds Holliday junction (HJ) DNA. The HJ becomes 2-fold symmetrical on binding to RuvC with unstacked arms; it has a different conformation from HJ DNA in complex with RuvA. In the full resolvosome a probable DNA-RuvA(4)-RuvB(12)-RuvC(2) complex forms which resolves the HJ. Requires Mg(2+) as cofactor.

The protein localises to the cytoplasm. It catalyses the reaction Endonucleolytic cleavage at a junction such as a reciprocal single-stranded crossover between two homologous DNA duplexes (Holliday junction).. The RuvA-RuvB-RuvC complex processes Holliday junction (HJ) DNA during genetic recombination and DNA repair. Endonuclease that resolves HJ intermediates. Cleaves cruciform DNA by making single-stranded nicks across the HJ at symmetrical positions within the homologous arms, yielding a 5'-phosphate and a 3'-hydroxyl group; requires a central core of homology in the junction. The consensus cleavage sequence is 5'-(A/T)TT(C/G)-3'. Cleavage occurs on the 3'-side of the TT dinucleotide at the point of strand exchange. HJ branch migration catalyzed by RuvA-RuvB allows RuvC to scan DNA until it finds its consensus sequence, where it cleaves and resolves the cruciform DNA. The polypeptide is Crossover junction endodeoxyribonuclease RuvC (Cereibacter sphaeroides (strain ATCC 17029 / ATH 2.4.9) (Rhodobacter sphaeroides)).